The sequence spans 1249 residues: Nuclear envelope pore membrane protein POM 121 (1249 aa).

Over residues 1–10 (MSPAAAAAGA) the composition is skewed to low complexity. The tract at residues 1–27 (MSPAAAAAGAGERRRPIASVRDGRGRG) is disordered. Positions 1 to 34 (MSPAAAAAGAGERRRPIASVRDGRGRGCGGPARA) are cisternal side. Residues 1–285 (MSPAAAAAGA…APPDRRFSRS (285 aa)) are required for targeting to the nucleus and nuclear pore complex. A compositionally biased stretch (basic and acidic residues) spans 11 to 25 (GERRRPIASVRDGRG). The chain crosses the membrane as a helical span at residues 35 to 55 (VLLGLSLVGLLLYLVPAAAAL). Positions 56-1249 (AWLTVGATAA…QARRQHTRKK (1194 aa)) are pore side. Residue Ser-94 is modified to Phosphoserine. 5 disordered regions span residues 136–220 (LMGS…CGTL), 319–530 (KEKK…LGYS), 602–776 (KKMQ…PVFS), 959–986 (PLPS…AKPA), and 1226–1249 (IGAG…TRKK). The segment covering 168–190 (ARPAPRSPPPRSPPPRSPPPSPP) has biased composition (pro residues). Ser-345, Ser-351, Ser-371, Ser-393, and Ser-396 each carry phosphoserine. Residues 405 to 423 (IPSSSRNAITSSYSSTRGI) show a composition bias toward polar residues. Over residues 432–445 (PSSSPFSSPASSRS) the composition is skewed to low complexity. Composition is skewed to basic and acidic residues over residues 450-462 (RPAK…ELCH) and 472-486 (ADRE…DTTP). Polar residues predominate over residues 491 to 502 (NSNSQSTPGSSG). Residues 635 to 652 (PPLGLSQSGPPGLLPSPS) are compositionally biased toward low complexity. A compositionally biased stretch (polar residues) spans 683-696 (QAETATKPQATSAP). Composition is skewed to low complexity over residues 712 to 726 (SPSS…SAPP) and 749 to 770 (SVTA…TAPT). Basic residues predominate over residues 1239–1249 (LQARRQHTRKK).

The protein belongs to the POM121 family.

It is found in the nucleus. The protein localises to the nuclear pore complex. The protein resides in the nucleus membrane. It localises to the endoplasmic reticulum membrane. Its function is as follows. Essential component of the nuclear pore complex (NPC). The repeat-containing domain may be involved in anchoring components of the pore complex to the pore membrane. When overexpressed in cells induces the formation of cytoplasmic annulate lamellae (AL). This chain is Nuclear envelope pore membrane protein POM 121 (POM121), found in Homo sapiens (Human).